The sequence spans 115 residues: Large ribosomal subunit protein bL19 (115 aa).

It belongs to the bacterial ribosomal protein bL19 family.

In terms of biological role, this protein is located at the 30S-50S ribosomal subunit interface and may play a role in the structure and function of the aminoacyl-tRNA binding site. The sequence is that of Large ribosomal subunit protein bL19 from Baumannia cicadellinicola subsp. Homalodisca coagulata.